We begin with the raw amino-acid sequence, 606 residues long: 4-hydroxy-3-methylbut-2-en-1-yl diphosphate synthase (flavodoxin) (606 aa).

Residues Cys513, Cys516, Cys547, and Glu554 each contribute to the [4Fe-4S] cluster site.

This sequence belongs to the IspG family. The cofactor is [4Fe-4S] cluster.

The enzyme catalyses (2E)-4-hydroxy-3-methylbut-2-enyl diphosphate + oxidized [flavodoxin] + H2O + 2 H(+) = 2-C-methyl-D-erythritol 2,4-cyclic diphosphate + reduced [flavodoxin]. The protein operates within isoprenoid biosynthesis; isopentenyl diphosphate biosynthesis via DXP pathway; isopentenyl diphosphate from 1-deoxy-D-xylulose 5-phosphate: step 5/6. Its function is as follows. Converts 2C-methyl-D-erythritol 2,4-cyclodiphosphate (ME-2,4cPP) into 1-hydroxy-2-methyl-2-(E)-butenyl 4-diphosphate. This Chlamydia abortus (strain DSM 27085 / S26/3) (Chlamydophila abortus) protein is 4-hydroxy-3-methylbut-2-en-1-yl diphosphate synthase (flavodoxin).